Here is a 668-residue protein sequence, read N- to C-terminus: Glucan endo-1,3-beta-D-glucosidase (668 aa).

Residues 2-208 (VNIQTNTSYI…SGIIRIALLP (207 aa)) form a beta-sandwich subdomain region. The region spanning 2-668 (VNIQTNTSYI…LWWIHSRSDE (667 aa)) is the GH81 domain. N65, N124, N160, and N187 each carry an N-linked (GlcNAc...) asparagine glycan. Residues 209-299 (DSDSKHEAVL…GDSWVLKTDP (91 aa)) form an alpha/beta subdomain region. Residues 240 to 443 (EYNWEKKDSG…TKLDPAWGRK (204 aa)) are involved in beta-glucan binding. Positions 309–668 (GIKEESHDEI…LWWIHSRSDE (360 aa)) are (alpha/beta)6 barrel subdomain. D418 is an active-site residue. Position 422 (H422) interacts with (1,3-beta-D-glucosyl)n. An N-linked (GlcNAc...) asparagine glycan is attached at N465. Active-site residues include E494 and E498. (1,3-beta-D-glucosyl)n contacts are provided by E494 and E498. Positions 564 to 566 (KRD) are may provide specificity for triple-helical beta-glucan.

This sequence belongs to the glycosyl hydrolase 81 family. As to expression, expressed in roots (at protein level). Expressed in leaves.

Its subcellular location is the secreted. It localises to the cell wall. The catalysed reaction is Hydrolysis of (1-&gt;3)-beta-D-glucosidic linkages in (1-&gt;3)-beta-D-glucans.. Functionally, cleaves internal linkages in 1,3-beta-glucan. Beta-glucan, a polysaccharide constituent of fungal cell walls, can act as an elicitor in the plant, triggering defense responses including phytoalexin synthesis. The sequence is that of Glucan endo-1,3-beta-D-glucosidase from Glycine max (Soybean).